Consider the following 346-residue polypeptide: Probable galacturonosyltransferase-like 6 (346 aa).

Residues 1 to 21 form a helical; Signal-anchor for type II membrane protein membrane-spanning segment; sequence MLWITRFAGLFSAAMAVIVLS. The Lumenal portion of the chain corresponds to 22–346; the sequence is PSLQSFPPAA…TPYDLYRHSH (325 aa). The N-linked (GlcNAc...) asparagine glycan is linked to N203.

It belongs to the glycosyltransferase 8 family.

The protein localises to the golgi apparatus membrane. It participates in glycan metabolism; pectin biosynthesis. May be involved in pectin and/or xylans biosynthesis in cell walls. The polypeptide is Probable galacturonosyltransferase-like 6 (GATL6) (Arabidopsis thaliana (Mouse-ear cress)).